Here is a 590-residue protein sequence, read N- to C-terminus: MALLQSSLIWVVYAIVFFLLVAVSSIFIYIYQTPSERSTYVTTVCIFTLTALLATVLLLPVDVALVSSTTSSREGRRKSWATQDEVDKITFSLAVAYYFLYSLDAVLCLLVVPFTYFWYEEYDEVASEDGSQTFRKRFWGAFKYTVAFILLTVILFLVGFFVPIGRRKDKPNLDLDYFRRLLTENHGERALTFALGLLITIGILVYVLYTSTGLALLPVTIIKSAPAISSPTLSANTASRLEENIERQRQLEGRCGGNPDRLPSKQRRELDSLVRQARTLRRRQRLAEEARRPSGSWLLNAWFKLSAVFRPLKLLSGLLLLAIAMLVWVSMLLTSIDKAMNSICKQNCGYILGKTNILNPINWVFVHSSKVFPVDYILFVFLVLVFFCSSVVGIATTGIRFLWVRIFQLRKGHTSPQALLITTVMLTLITLALNYSISMVVAPQYATYGPQTFCDHPPKHPGEQPDCTGLEPLIKPCSELSENPTAKEICTPTVVSTFLNRITLNFPFFGIVDFWAQFFFLGLSLLVFLVTIFRTPKLDEQQFDEDAEAAEEEGLLASTGRRFGATWEDITGRASRSPQVSGSAGRGTRE.

A run of 10 helical transmembrane segments spans residues 8-28, 46-66, 94-114, 145-165, 190-210, 314-334, 348-367, 376-396, 421-441, and 508-528; these read LIWVVYAIVFFLLVAVSSIFI, IFTLTALLATVLLLPVDVALV, AVAYYFLYSLDAVLCLLVVPF, TVAFILLTVILFLVGFFVPIG, ALTFALGLLITIGILVYVLYT, LLSGLLLLAIAMLVWVSMLLT, CGYILGKTNILNPINWVFVH, YILFVFLVLVFFCSSVVGIAT, ITTVMLTLITLALNYSISMVV, and FFGIVDFWAQFFFLGLSLLVF. The segment at 567–590 is disordered; sequence WEDITGRASRSPQVSGSAGRGTRE.

Belongs to the LIMR family. LMBRD1 subfamily.

It is found in the lysosome membrane. Functionally, probable lysosomal cobalamin transporter. Required to export cobalamin from lysosomes allowing its conversion to cofactors. This chain is Probable lysosomal cobalamin transporter, found in Ajellomyces capsulatus (strain NAm1 / WU24) (Darling's disease fungus).